A 213-amino-acid polypeptide reads, in one-letter code: Holliday junction resolvase RecU (213 aa).

Mg(2+) is bound by residues threonine 98, aspartate 100, glutamate 113, and glutamine 132.

This sequence belongs to the RecU family. Mg(2+) serves as cofactor.

It is found in the cytoplasm. The catalysed reaction is Endonucleolytic cleavage at a junction such as a reciprocal single-stranded crossover between two homologous DNA duplexes (Holliday junction).. Its function is as follows. Endonuclease that resolves Holliday junction intermediates in genetic recombination. Cleaves mobile four-strand junctions by introducing symmetrical nicks in paired strands. Promotes annealing of linear ssDNA with homologous dsDNA. Required for DNA repair, homologous recombination and chromosome segregation. This is Holliday junction resolvase RecU from Ligilactobacillus salivarius (strain UCC118) (Lactobacillus salivarius).